An 887-amino-acid polypeptide reads, in one-letter code: Translation initiation factor IF-2 (887 aa).

The interval 1–259 (MSDEQDQGET…KVGDDRRRGA (259 aa)) is disordered. The segment covering 62 to 94 (GRPSAPSRASGGAAAPRGLTAAEQAARQRAVVE) has biased composition (low complexity). 2 stretches are compositionally biased toward basic and acidic residues: residues 95-111 (QQREAARLEAERREQEK) and 119-158 (EEARRKAEEEARAAEEAERLRAEEEARRREEEEAERRRAA). Residues 159–210 (EASQATAAPPAPAAAASPRAAMPAPTAAPARPGAAPARRTAPVPPATSASET) are compositionally biased toward low complexity. Over residues 250–259 (KVGDDRRRGA) the composition is skewed to basic and acidic residues. A tr-type G domain is found at 386-556 (VRPPVVTIMG…LLQAELLDLK (171 aa)). Positions 395-402 (GHVDHGKT) are G1. 395–402 (GHVDHGKT) contributes to the GTP binding site. Residues 420–424 (GITQH) are G2. The segment at 442–445 (DTPG) is G3. GTP is bound by residues 442-446 (DTPGH) and 496-499 (NKID). Positions 496–499 (NKID) are G4. The interval 532–534 (SAL) is G5.

The protein belongs to the TRAFAC class translation factor GTPase superfamily. Classic translation factor GTPase family. IF-2 subfamily.

Its subcellular location is the cytoplasm. One of the essential components for the initiation of protein synthesis. Protects formylmethionyl-tRNA from spontaneous hydrolysis and promotes its binding to the 30S ribosomal subunits. Also involved in the hydrolysis of GTP during the formation of the 70S ribosomal complex. This chain is Translation initiation factor IF-2, found in Acidiphilium cryptum (strain JF-5).